The primary structure comprises 416 residues: MGLFGTKKIGKYEIGRTIGEGNFAKVKLGYDTTNGTYVAVKIIDKALVIQKGLESQVKREIRTMKLLNHPNIVQIHEVIGTKTKICIVMEYVSGGQLSDRLGRQKMKESDARKLFQQLIDAVDYCHNRGVYHRDLKPQNLLLDSKGNLKVSDFGLSAVPKSGDMLSTACGSPCYIAPELIMNKGYSGAAVDVWSCGVILFELLAGYPPFDDHTLPVLYKKILRADYTFPPGFTGEQKRLIFNILDPNPLSRITLAEIIIKDSWFKIGYTPVYHQLSDSIKDNVAEINAATASSNFINAFQIIAMSSDLDLSGLFEENDDKRYKTRIGSKNTAQETIKKIEAAATYVSLSVERIKHFKVKIQPKEIRSRSSYDLLSAEVIEVTPTNCVIEISKSAGELRLYMEFCQSLSSLLTAEVS.

One can recognise a Protein kinase domain in the interval 12 to 264 (YEIGRTIGEG…AEIIIKDSWF (253 aa)). ATP is bound by residues 18 to 26 (IGEGNFAKV) and Lys-41. The active-site Proton acceptor is Asp-134. The interval 152–178 (DFGLSAVPKSGDMLSTACGSPCYIAPE) is activation loop. Phosphoserine is present on Ser-156. Residue Thr-167 is modified to Phosphothreonine. Positions 291 to 315 (ASSNFINAFQIIAMSSDLDLSGLFE) constitute an NAF domain. A PPI region spans residues 321 to 351 (RYKTRIGSKNTAQETIKKIEAAATYVSLSVE).

This sequence belongs to the protein kinase superfamily. CAMK Ser/Thr protein kinase family. SNF1 subfamily. As to quaternary structure, interacts with CBL9. The cofactor is Mn(2+).

The catalysed reaction is L-seryl-[protein] + ATP = O-phospho-L-seryl-[protein] + ADP + H(+). It carries out the reaction L-threonyl-[protein] + ATP = O-phospho-L-threonyl-[protein] + ADP + H(+). CIPK serine-threonine protein kinases interact with CBL proteins. Binding of a CBL protein to the regulatory NAF domain of CIPK protein lead to the activation of the kinase in a calcium-dependent manner. In Arabidopsis thaliana (Mouse-ear cress), this protein is CBL-interacting serine/threonine-protein kinase 21 (CIPK21).